The following is a 130-amino-acid chain: MATKSFHRTDRVSAQVRRDLGTIVHAAVRDHGLPSVSVSDVEISRDLAHAKVFVTALQQERSAEAVKGLKDIAGQLRTQLARAMKLRHVPELHFHYDDSVDRGERIDNLLRDLDDVGPGATSSDEDAEQR.

Residues 111–130 (RDLDDVGPGATSSDEDAEQR) are disordered.

The protein belongs to the RbfA family. In terms of assembly, monomer. Binds 30S ribosomal subunits, but not 50S ribosomal subunits or 70S ribosomes.

Its subcellular location is the cytoplasm. In terms of biological role, one of several proteins that assist in the late maturation steps of the functional core of the 30S ribosomal subunit. Associates with free 30S ribosomal subunits (but not with 30S subunits that are part of 70S ribosomes or polysomes). Required for efficient processing of 16S rRNA. May interact with the 5'-terminal helix region of 16S rRNA. The protein is Ribosome-binding factor A of Xanthomonas oryzae pv. oryzae (strain MAFF 311018).